The sequence spans 199 residues: Ribonuclease HII (199 aa).

An RNase H type-2 domain is found at 11 to 199; it reads SRVAGVDEVG…RRSFLRRLLG (189 aa). 3 residues coordinate a divalent metal cation: D17, E18, and D113.

This sequence belongs to the RNase HII family. Mn(2+) serves as cofactor. Mg(2+) is required as a cofactor.

Its subcellular location is the cytoplasm. It carries out the reaction Endonucleolytic cleavage to 5'-phosphomonoester.. Endonuclease that specifically degrades the RNA of RNA-DNA hybrids. In Synechococcus sp. (strain CC9902), this protein is Ribonuclease HII.